The sequence spans 497 residues: MPDNTIRSNSEVVLIGAGIMSATLGLILKELQPDIKIEIYERLDVAAAESSDAWNNAGTGHSAFCELNYTPEKADGSIDPKKAISIAESFEISRQFWSYLVQQNKVPSPENFIKSVPHMSFVWGDKNVEYLRKRFEALQSNPIFADMTFSTDFNQLKEWMPLVMEGREADEKLAATHMEIGTDVNFGALTRSMFNYLEKLDGVTLYFNHEVKKLKQREDKSWRIKITDLSTGQKRKAYTKFVFIGAGGGSLPLLEKADVPEGHGYGGFPVSGQWLKCTNPEVIAKHQAKVYGKASVGAPPMSVPHIDTRVIDGEKALLFGPFAGFSTRFLKNGSYLDLPLSIKANNLIPMLSAGFHNIPLTKYLIEQVRQSPKDRMKALREYLPTARSKDWKLEKAGQRVQVIKKGKDGGGVLEFGTEVINTHDGTLAVLLGASPGASTAVAIMVDLISRCFTNQIKTPEWEAKMKEMIPSYGKTLNDKPELLAEMRKHTAEVLKIK.

It belongs to the MQO family. FAD serves as cofactor.

It carries out the reaction (S)-malate + a quinone = a quinol + oxaloacetate. The protein operates within carbohydrate metabolism; tricarboxylic acid cycle; oxaloacetate from (S)-malate (quinone route): step 1/1. The polypeptide is Probable malate:quinone oxidoreductase (Flavobacterium johnsoniae (strain ATCC 17061 / DSM 2064 / JCM 8514 / BCRC 14874 / CCUG 350202 / NBRC 14942 / NCIMB 11054 / UW101) (Cytophaga johnsonae)).